Reading from the N-terminus, the 215-residue chain is Adenylate kinase (215 aa).

Residue glycine 10–threonine 15 participates in ATP binding. An NMP region spans residues serine 30–valine 59. Residues threonine 31, arginine 36, lysine 57 to valine 59, glycine 85 to arginine 88, and glutamine 92 contribute to the AMP site. The tract at residues glycine 122–aspartate 159 is LID. Residues arginine 123 and threonine 132–tyrosine 133 contribute to the ATP site. AMP is bound by residues arginine 156 and arginine 167. ATP is bound at residue glutamine 201.

This sequence belongs to the adenylate kinase family. Monomer.

The protein resides in the cytoplasm. The enzyme catalyses AMP + ATP = 2 ADP. The protein operates within purine metabolism; AMP biosynthesis via salvage pathway; AMP from ADP: step 1/1. Catalyzes the reversible transfer of the terminal phosphate group between ATP and AMP. Plays an important role in cellular energy homeostasis and in adenine nucleotide metabolism. The protein is Adenylate kinase of Hydrogenovibrio crunogenus (strain DSM 25203 / XCL-2) (Thiomicrospira crunogena).